Reading from the N-terminus, the 270-residue chain is 4-hydroxy-tetrahydrodipicolinate reductase (270 aa).

NAD(+) is bound by residues glycine 8–methionine 13 and glutamate 34. Arginine 35 serves as a coordination point for NADP(+). Residues glycine 98–threonine 100 and serine 122–methionine 125 each bind NAD(+). Histidine 155 functions as the Proton donor/acceptor in the catalytic mechanism. A (S)-2,3,4,5-tetrahydrodipicolinate-binding site is contributed by histidine 156. Lysine 159 serves as the catalytic Proton donor. Residue glycine 165 to threonine 166 participates in (S)-2,3,4,5-tetrahydrodipicolinate binding.

It belongs to the DapB family.

The protein resides in the cytoplasm. It carries out the reaction (S)-2,3,4,5-tetrahydrodipicolinate + NAD(+) + H2O = (2S,4S)-4-hydroxy-2,3,4,5-tetrahydrodipicolinate + NADH + H(+). The enzyme catalyses (S)-2,3,4,5-tetrahydrodipicolinate + NADP(+) + H2O = (2S,4S)-4-hydroxy-2,3,4,5-tetrahydrodipicolinate + NADPH + H(+). It participates in amino-acid biosynthesis; L-lysine biosynthesis via DAP pathway; (S)-tetrahydrodipicolinate from L-aspartate: step 4/4. Functionally, catalyzes the conversion of 4-hydroxy-tetrahydrodipicolinate (HTPA) to tetrahydrodipicolinate. In Anaeromyxobacter dehalogenans (strain 2CP-1 / ATCC BAA-258), this protein is 4-hydroxy-tetrahydrodipicolinate reductase.